We begin with the raw amino-acid sequence, 178 residues long: uncharacterized protein (178 aa).

This is an uncharacterized protein from Bacillus subtilis (strain 168).